The primary structure comprises 114 residues: Amphinase-3 (114 aa).

H15 acts as the Proton acceptor in catalysis. An N-linked (GlcNAc...) asparagine glycan is attached at N25. Disulfide bonds link C26-C79, C41-C85, C59-C100, and C97-C114. 42 to 46 (KPINT) provides a ligand contact to substrate. Residues N67 and N91 are each glycosylated (N-linked (GlcNAc...) asparagine). The Proton donor role is filled by H107.

The protein belongs to the pancreatic ribonuclease family. Monomer. Post-translationally, there are at least five different forms arising from glycan heterogeneity.

The protein localises to the secreted. Functionally, endonuclease, hydrolyzes highly polymerized RNA, poly(U) and poly(C), and the dinucleotides CpA and UpA. More active towards rCA than rUA or rUG. Has cytotoxic activity against cultured human submaxillary gland carcinoma cells. The protein is Amphinase-3 of Lithobates pipiens (Northern leopard frog).